The sequence spans 395 residues: Digeranylgeranylglycerophospholipid reductase (395 aa).

Residues alanine 15, aspartate 34, cysteine 45, alanine 46, alanine 48, arginine 97, alanine 121, aspartate 276, and glycine 288 each coordinate FAD. Arginine 329 is an a 2,3-bis-O-(geranylgeranyl)-sn-glycerol 1-phospholipid binding site.

Belongs to the geranylgeranyl reductase family. DGGGPL reductase subfamily. It depends on FAD as a cofactor.

The catalysed reaction is a 2,3-bis-O-phytanyl-sn-glycerol 1-phospholipid + 8 A = a 2,3-bis-O-(geranylgeranyl)-sn-glycerol 1-phospholipid + 8 AH2. The enzyme catalyses 2,3-bis-O-(phytanyl)-sn-glycerol 1-phosphate + 8 A = 2,3-bis-O-(geranylgeranyl)-sn-glycerol 1-phosphate + 8 AH2. It carries out the reaction CDP-2,3-bis-O-(geranylgeranyl)-sn-glycerol + 8 AH2 = CDP-2,3-bis-O-(phytanyl)-sn-glycerol + 8 A. It catalyses the reaction archaetidylserine + 8 AH2 = 2,3-bis-O-phytanyl-sn-glycero-3-phospho-L-serine + 8 A. The protein operates within membrane lipid metabolism; glycerophospholipid metabolism. Functionally, is involved in the reduction of 2,3-digeranylgeranylglycerophospholipids (unsaturated archaeols) into 2,3-diphytanylglycerophospholipids (saturated archaeols) in the biosynthesis of archaeal membrane lipids. Catalyzes the formation of archaetidic acid (2,3-di-O-phytanyl-sn-glyceryl phosphate) from 2,3-di-O-geranylgeranylglyceryl phosphate (DGGGP) via the hydrogenation of each double bond of the isoprenoid chains. Is also probably able to reduce double bonds of geranyl groups in CDP-2,3-bis-O-(geranylgeranyl)-sn-glycerol and archaetidylserine, thus acting at various stages in the biosynthesis of archaeal membrane lipids. This is Digeranylgeranylglycerophospholipid reductase from Thermococcus kodakarensis (strain ATCC BAA-918 / JCM 12380 / KOD1) (Pyrococcus kodakaraensis (strain KOD1)).